The primary structure comprises 333 residues: Holliday junction branch migration complex subunit RuvB (333 aa).

A large ATPase domain (RuvB-L) region spans residues 1–182 (MDERLLSGES…FGVLSRLEYY (182 aa)). ATP contacts are provided by residues L21, R22, G63, K66, T67, T68, 129–131 (EDF), R172, Y182, and R219. T67 is a Mg(2+) binding site. Positions 183 to 253 (TVDQLSAIVE…ITQMALELLQ (71 aa)) are small ATPAse domain (RuvB-S). Residues 256 to 333 (KLGLDHIDHK…QHFGMEMPKI (78 aa)) are head domain (RuvB-H). DNA is bound by residues R311 and R316.

Belongs to the RuvB family. Homohexamer. Forms an RuvA(8)-RuvB(12)-Holliday junction (HJ) complex. HJ DNA is sandwiched between 2 RuvA tetramers; dsDNA enters through RuvA and exits via RuvB. An RuvB hexamer assembles on each DNA strand where it exits the tetramer. Each RuvB hexamer is contacted by two RuvA subunits (via domain III) on 2 adjacent RuvB subunits; this complex drives branch migration. In the full resolvosome a probable DNA-RuvA(4)-RuvB(12)-RuvC(2) complex forms which resolves the HJ.

It is found in the cytoplasm. It carries out the reaction ATP + H2O = ADP + phosphate + H(+). The RuvA-RuvB-RuvC complex processes Holliday junction (HJ) DNA during genetic recombination and DNA repair, while the RuvA-RuvB complex plays an important role in the rescue of blocked DNA replication forks via replication fork reversal (RFR). RuvA specifically binds to HJ cruciform DNA, conferring on it an open structure. The RuvB hexamer acts as an ATP-dependent pump, pulling dsDNA into and through the RuvAB complex. RuvB forms 2 homohexamers on either side of HJ DNA bound by 1 or 2 RuvA tetramers; 4 subunits per hexamer contact DNA at a time. Coordinated motions by a converter formed by DNA-disengaged RuvB subunits stimulates ATP hydrolysis and nucleotide exchange. Immobilization of the converter enables RuvB to convert the ATP-contained energy into a lever motion, pulling 2 nucleotides of DNA out of the RuvA tetramer per ATP hydrolyzed, thus driving DNA branch migration. The RuvB motors rotate together with the DNA substrate, which together with the progressing nucleotide cycle form the mechanistic basis for DNA recombination by continuous HJ branch migration. Branch migration allows RuvC to scan DNA until it finds its consensus sequence, where it cleaves and resolves cruciform DNA. The sequence is that of Holliday junction branch migration complex subunit RuvB from Bacillus cytotoxicus (strain DSM 22905 / CIP 110041 / 391-98 / NVH 391-98).